The chain runs to 398 residues: Na(+)/H(+) antiporter NhaA (398 aa).

The next 11 helical transmembrane spans lie at 19-39 (IGGILLMLATALALIMANSPG), 64-84 (LLLWINDGLMAGFFFLVGLEL), 99-119 (IILPAIGALGGMVVPSCIYLA), 130-150 (GWAIPAATDIAFALGILSLLG), 159-179 (ILLTTLAIFDDIGAILIIACF), 182-202 (NDIYLPGLLIALLCMLILFIV), 222-242 (IAMLKSGVHATLAGVILAMFI), 266-286 (ATFIILPIFAFANSGINLTNI), 299-319 (IALGLFIGKPLGIISFLWVGV), 337-357 (GMSALAGIGFTMSLFVGSLAF), and 370-390 (LGIIMGSLFSGLLGYLLLNKT).

It belongs to the NhaA Na(+)/H(+) (TC 2.A.33) antiporter family.

The protein localises to the cell inner membrane. It catalyses the reaction Na(+)(in) + 2 H(+)(out) = Na(+)(out) + 2 H(+)(in). In terms of biological role, na(+)/H(+) antiporter that extrudes sodium in exchange for external protons. The polypeptide is Na(+)/H(+) antiporter NhaA (Desulfotalea psychrophila (strain LSv54 / DSM 12343)).